The chain runs to 351 residues: Transcriptional activator POG1 (351 aa).

Basic and acidic residues predominate over residues Met-1 to Thr-27. Residues Met-1 to Lys-56 form a disordered region. Residues Ser-28–Lys-56 show a composition bias toward polar residues. Phosphoserine is present on residues Ser-152 and Ser-168. Disordered stretches follow at residues Gly-237–Met-256 and Ser-280–Thr-351. Polar residues-rich tracts occupy residues Gln-241 to Met-256 and Ile-287 to Pro-296. Ser-314 bears the Phosphoserine mark.

Belongs to the POG1 family. Phosphorylated by CDC28.

It localises to the nucleus. Transcriptional activator which promotes cell cycle recovery with CLN2, after pheromone induced G1 arrest, probably inhibiting the ability of STE20 to activate the pheromone response pathway. Binds the promoters of genes that function in cell cycle regulation, cytoskeletal organization, and spindle assembly. May also be involved in stress-resistance. The protein is Transcriptional activator POG1 (POG1) of Saccharomyces cerevisiae (strain YJM789) (Baker's yeast).